The primary structure comprises 123 residues: MPTIQQLIRNKRQAAENKTKSPALQRSPQRRGVCTRVYTTTPKKPNSALRKVARVRLTSGFEVTAYIPGIGHNLQEHSVVLVRGGRVKDLPGVRYHIVRGTLDVVGVKDRRKGRSKYGVKRPK.

Positions 9–31 (RNKRQAAENKTKSPALQRSPQRR) are disordered.

The protein belongs to the universal ribosomal protein uS12 family. Part of the 30S ribosomal subunit.

It is found in the plastid. The protein resides in the chloroplast. With S4 and S5 plays an important role in translational accuracy. Located at the interface of the 30S and 50S subunits. The protein is Small ribosomal subunit protein uS12c (rps12) of Spirogyra maxima (Green alga).